A 319-amino-acid chain; its full sequence is Methionyl-tRNA formyltransferase (319 aa).

116-119 (SLLP) is a binding site for (6S)-5,6,7,8-tetrahydrofolate.

This sequence belongs to the Fmt family.

It carries out the reaction L-methionyl-tRNA(fMet) + (6R)-10-formyltetrahydrofolate = N-formyl-L-methionyl-tRNA(fMet) + (6S)-5,6,7,8-tetrahydrofolate + H(+). In terms of biological role, attaches a formyl group to the free amino group of methionyl-tRNA(fMet). The formyl group appears to play a dual role in the initiator identity of N-formylmethionyl-tRNA by promoting its recognition by IF2 and preventing the misappropriation of this tRNA by the elongation apparatus. This is Methionyl-tRNA formyltransferase from Chlorobium phaeovibrioides (strain DSM 265 / 1930) (Prosthecochloris vibrioformis (strain DSM 265)).